Reading from the N-terminus, the 208-residue chain is Translation initiation factor 6 (208 aa).

The protein belongs to the eIF-6 family.

In terms of biological role, binds to the 50S ribosomal subunit and prevents its association with the 30S ribosomal subunit to form the 70S initiation complex. The protein is Translation initiation factor 6 (eif6) of Nanoarchaeum equitans (strain Kin4-M).